We begin with the raw amino-acid sequence, 511 residues long: Maturase K (511 aa).

This sequence belongs to the intron maturase 2 family. MatK subfamily.

The protein resides in the plastid. Its subcellular location is the chloroplast. Functionally, usually encoded in the trnK tRNA gene intron. Probably assists in splicing its own and other chloroplast group II introns. The polypeptide is Maturase K (Lolium perenne (Perennial ryegrass)).